The sequence spans 51 residues: Putative protein LomR (51 aa).

This sequence belongs to the outer membrane OOP (TC 1.B.6) superfamily. Ail family.

This chain is Putative protein LomR (lomR), found in Escherichia coli (strain K12).